We begin with the raw amino-acid sequence, 338 residues long: Large ribosomal subunit protein uL3 (338 aa).

Residues 230–253 (HRKGHRRTGTIGPQAPALMFTQPR) are disordered.

Belongs to the universal ribosomal protein uL3 family. Part of the 50S ribosomal subunit. Forms a cluster with proteins L14 and L24e.

In terms of biological role, one of the primary rRNA binding proteins, it binds directly near the 3'-end of the 23S rRNA, where it nucleates assembly of the 50S subunit. The polypeptide is Large ribosomal subunit protein uL3 (Pyrobaculum neutrophilum (strain DSM 2338 / JCM 9278 / NBRC 100436 / V24Sta) (Thermoproteus neutrophilus)).